Here is a 455-residue protein sequence, read N- to C-terminus: MARPVVAIIGRPNVGKSTLVNRLCRSREAIVHDQPGVTRDRTYQDGYWGDREFKVVDTGGLVFDDDSEFLPEIREQASLALAEASVALVIVDGQQGLTAADESIAEWLRTQNCKTLLAVNKCESPEQGLGMAAEFWRLGLGEPHPISAIHGAGTAELLDQVLTFLPPKDEESDEEEPIQLSIIGRPNVGKSSLLNSICGETRAIVSPIRGTTRDTIDTRIERENRRWRLIDTAGIRRRRSVNYGPEFFGINRSFKAIERSDVCVLVIDALDGVTEQDQRLAGRIEEDGRACVVVVNKWDAVEKDSHTMTAMEKELRAKLYFLDWAPMLFTSALTGQRVDSIFALAALAVEQHRRRVSTSVVNEVLKEALSWRSPPTTRGGRQGRLYYGTQVASRPPSFTLFVNEPKLFGDTYRRYVERQIREGLGFDGTPVKLFWRGKQQRDAEKELVRQQNRQG.

2 consecutive EngA-type G domains span residues 4–169 (PVVA…PPKD) and 178–353 (IQLS…EQHR). Residues 10–17 (GRPNVGKS), 57–61 (DTGGL), 120–123 (NKCE), 184–191 (GRPNVGKS), 231–235 (DTAGI), and 296–299 (NKWD) each bind GTP. In terms of domain architecture, KH-like spans 354–439 (RRVSTSVVNE…PVKLFWRGKQ (86 aa)).

The protein belongs to the TRAFAC class TrmE-Era-EngA-EngB-Septin-like GTPase superfamily. EngA (Der) GTPase family. Associates with the 50S ribosomal subunit.

Its function is as follows. GTPase that plays an essential role in the late steps of ribosome biogenesis. The chain is GTPase Der from Synechococcus sp. (strain CC9311).